A 386-amino-acid polypeptide reads, in one-letter code: Benzoyl-CoA reductase subunit C (386 aa).

This sequence belongs to the FldB/FldC dehydratase alpha/beta subunit family. Heterotetramer composed of A, B, C, and D subunits. Iron-sulfur cluster is required as a cofactor. The cofactor is an oxidized flavin.

It catalyses the reaction cyclohexa-1,5-diene-1-carbonyl-CoA + oxidized 2[4Fe-4S]-[ferredoxin] + 2 ADP + 2 phosphate = reduced 2[4Fe-4S]-[ferredoxin] + benzoyl-CoA + 2 ATP + 2 H2O. The enzyme catalyses 3-hydroxybenzoyl-CoA + AH2 + 2 ATP + 2 H2O = 3-hydroxycyclohexa-1,5-diene-1-carbonyl-CoA + A + 2 ADP + 2 phosphate + 2 H(+). Functionally, catalyzes the anaerobic reduction of benzoyl-CoA and 3-hydroxybenzoyl-CoA to form cyclohexa-1,5-diene-1-carbonyl-CoA and 3-hydroxycyclohexa-1,5-diene-1-carbonyl-CoA, respectively. The enzyme also reduces other benzoyl-CoA analogs with small substituents at the aromatic ring. This Thauera aromatica protein is Benzoyl-CoA reductase subunit C (bcrC).